Consider the following 120-residue polypeptide: HTH-type transcriptional regulator NmtR (120 aa).

Positions 15 to 109 (LDSQAAAQVA…EAIYHSEHLH (95 aa)) constitute an HTH arsR-type domain. The segment at residues 49-72 (VTDLAEAIGMEQSAVSHQLRVLRN) is a DNA-binding region (H-T-H motif). Residues aspartate 91, histidine 93, histidine 104, and histidine 107 each contribute to the Ni(2+) site.

In terms of assembly, homodimer.

Binding to DNA is inhibited by nickel and, to some extent, cobalt ions. In terms of biological role, represses transcription of ctpJ/nmtA, by binding to its promoter region. This is HTH-type transcriptional regulator NmtR (nmtR) from Mycobacterium tuberculosis (strain ATCC 25618 / H37Rv).